Reading from the N-terminus, the 307-residue chain is MEKIAIIGAGRVGESTAQFLAKNDTCRELVLLDVREGAAEGAALDIQETAPLFGFDTRLKGGTDAAILSGAELVVITAGIPRKPGMSRSDVLDTNVAILDKLVDGIMEHAPDAMLLLVSNPVDVLTYRAWQRTGWPRNRVFGQAGVLDSSRMASFVALETGLSVNDINAMVLGGHGDSMVPMLRYSTINGIPVRHFLSEEAIARIVERTRHGGAEILALKQTSSAYDAPAAAIAAMVDAIALDRKRVLPTVALLEGEYGERDVAMGVPCILGRNGVESVIELPLEPSERKEFDQSLAGVRDDINRLK.

Residues 8–13 (GAGRVG) and Asp33 each bind NAD(+). Positions 82 and 88 each coordinate substrate. Residues Asn95 and 118–120 (VSN) contribute to the NAD(+) site. Residues Asn120 and Arg151 each contribute to the substrate site. The active-site Proton acceptor is His175.

Belongs to the LDH/MDH superfamily. MDH type 3 family.

The catalysed reaction is (S)-malate + NAD(+) = oxaloacetate + NADH + H(+). Catalyzes the reversible oxidation of malate to oxaloacetate. In Thioalkalivibrio sulfidiphilus (strain HL-EbGR7), this protein is Malate dehydrogenase.